The primary structure comprises 434 residues: Putative magnesium transporter MRS2-D (434 aa).

2 disordered regions span residues 126–171 (AASP…DGEA) and 279–311 (EASE…AGGG). A compositionally biased stretch (basic and acidic residues) spans 279 to 291 (EASELEDHSSRDE). The next 2 membrane-spanning stretches (helical) occupy residues 367–387 (GILL…TGVF) and 405–425 (FPCA…AALL).

Belongs to the CorA metal ion transporter (MIT) (TC 1.A.35.5) family.

Its subcellular location is the membrane. In terms of biological role, putative magnesium transporter. This is Putative magnesium transporter MRS2-D (MRS2-D) from Oryza sativa subsp. japonica (Rice).